Consider the following 190-residue polypeptide: MPALVLASTSPRRRELLARIGVMPARIAAPEIDETPLKGELPRDYVVRLARGKALAVARAPDEVVLAGDTTVSVGRRILEKPADEPDLRRMLGLLSGRRHHVWSGVCVVGTDGKARVRAVDTIVAFKALSAAEIDAYVASGEGMGKAGGYAIQGRAEAFVRFLSGSHSNVVGLPLFETRALLSSVGIPLG.

Asp69 functions as the Proton acceptor in the catalytic mechanism.

It belongs to the Maf family. YhdE subfamily. Requires a divalent metal cation as cofactor.

It localises to the cytoplasm. It carries out the reaction dTTP + H2O = dTMP + diphosphate + H(+). It catalyses the reaction UTP + H2O = UMP + diphosphate + H(+). In terms of biological role, nucleoside triphosphate pyrophosphatase that hydrolyzes dTTP and UTP. May have a dual role in cell division arrest and in preventing the incorporation of modified nucleotides into cellular nucleic acids. This is dTTP/UTP pyrophosphatase from Sphingopyxis alaskensis (strain DSM 13593 / LMG 18877 / RB2256) (Sphingomonas alaskensis).